A 186-amino-acid chain; its full sequence is Elongation factor P (186 aa).

It belongs to the elongation factor P family.

It localises to the cytoplasm. It functions in the pathway protein biosynthesis; polypeptide chain elongation. Its function is as follows. Involved in peptide bond synthesis. Stimulates efficient translation and peptide-bond synthesis on native or reconstituted 70S ribosomes in vitro. Probably functions indirectly by altering the affinity of the ribosome for aminoacyl-tRNA, thus increasing their reactivity as acceptors for peptidyl transferase. This chain is Elongation factor P, found in Streptococcus thermophilus (strain CNRZ 1066).